The sequence spans 506 residues: MDPFLEFRVGNISLNEFYRRTIQSEFERILEDPLSNMKNYRFSKQSNYSTKEKTPLSIGVNCLDIDDTGQVLLGGGDDGSLSIWGLDESLHRNDEGEQELINKRLNYIKRQPHQSDDEPAQIMGYKNKRTRINDNNTMRLVHSFQTQRNKYRMYRQSSAAVPVQRSHISNKTDSPIGFSETLSETDSEASISHHKYGITTLKWYKADNGMFFTGSNDKTVKIWDTNRFEAVQDINLGYKINQIDNNVVDDSSLLVVASEDYYPRLIDLRTMNSGVTALGMGNQTRMQSEILCCKFNPVREQIIACGDMEGGVKLWDLRMRNRLYSELKRNKNRFKTINNDDNDDQSDVYFSSNQSKAHLRCCSDIVWNSEGSELCSVGMDGKLNVWRPFTEILQPEGLASYSQLGTQDLSRIKYKKRVSRRLLWFDKFLLCITDNGEVEIYNTEEKKLWNKLEYPMVNQVKKNQASHCQFSSMIVQTNIMNSVGLKLFFGTNNNTVSDGGSIFECS.

WD repeat units lie at residues 55–94, 193–233, 285–325, 357–396, and 404–451; these read PLSI…HRND, HHKY…AVQD, RMQS…RLYS, AHLR…LQPE, and LGTQ…LWNK.

The protein resides in the nucleus. In terms of biological role, involved in transcription-coupled repair nucleotide excision repair (NER) of UV-induced DNA lesions. The protein is Radiation-sensitive protein 28 (RAD28) of Saccharomyces cerevisiae (strain ATCC 204508 / S288c) (Baker's yeast).